The following is a 457-amino-acid chain: ATP-dependent protease ATPase subunit HslU (457 aa).

ATP contacts are provided by residues Val21, 63 to 68 (GVGKTE), Asp269, Glu335, and Arg407.

It belongs to the ClpX chaperone family. HslU subfamily. A double ring-shaped homohexamer of HslV is capped on each side by a ring-shaped HslU homohexamer. The assembly of the HslU/HslV complex is dependent on binding of ATP.

The protein localises to the cytoplasm. In terms of biological role, ATPase subunit of a proteasome-like degradation complex; this subunit has chaperone activity. The binding of ATP and its subsequent hydrolysis by HslU are essential for unfolding of protein substrates subsequently hydrolyzed by HslV. HslU recognizes the N-terminal part of its protein substrates and unfolds these before they are guided to HslV for hydrolysis. This Desulfotalea psychrophila (strain LSv54 / DSM 12343) protein is ATP-dependent protease ATPase subunit HslU.